The chain runs to 160 residues: Vegetative-specific protein V4 (160 aa).

Tandem repeats lie at residues 151-153 (NQP), 154-156 (NQP), and 157-159 (NQG). A 3 X 3 AA tandem repeats of N-Q-[PG] region spans residues 151–159 (NQPNQPNQG).

Functionally, unknown. Its expression during growth is not required for growth but for the proper initiation of development, therefore playing a role in the transition from growth to development. The sequence is that of Vegetative-specific protein V4 (lmcB) from Dictyostelium discoideum (Social amoeba).